A 468-amino-acid chain; its full sequence is Eukaryotic translation initiation factor 3 subunit M (468 aa).

The tract at residues 40–61 (VAPLIEPLRQQEQSEEEPDRKQ) is disordered. Residues 206–377 (DLELAQTHVV…SEFLVHRATY (172 aa)) enclose the PCI domain. Residues 419–468 (QAAAEEVGQGKSGDKGAKGGDRRRNPQQQQQSQPSQPQQAREVELVGGAE) are disordered. Positions 430 to 442 (SGDKGAKGGDRRR) are enriched in basic and acidic residues. A compositionally biased stretch (low complexity) spans 444–457 (PQQQQQSQPSQPQQ).

Belongs to the eIF-3 subunit M family. Component of the eukaryotic translation initiation factor 3 (eIF-3) complex.

The protein resides in the cytoplasm. Functionally, component of the eukaryotic translation initiation factor 3 (eIF-3) complex, which is involved in protein synthesis of a specialized repertoire of mRNAs and, together with other initiation factors, stimulates binding of mRNA and methionyl-tRNAi to the 40S ribosome. The eIF-3 complex specifically targets and initiates translation of a subset of mRNAs involved in cell proliferation. The sequence is that of Eukaryotic translation initiation factor 3 subunit M from Aspergillus fumigatus (strain CBS 144.89 / FGSC A1163 / CEA10) (Neosartorya fumigata).